Here is a 92-residue protein sequence, read N- to C-terminus: Small ribosomal subunit protein uS19c (92 aa).

It belongs to the universal ribosomal protein uS19 family.

It localises to the plastid. The protein localises to the chloroplast. Functionally, protein S19 forms a complex with S13 that binds strongly to the 16S ribosomal RNA. This is Small ribosomal subunit protein uS19c from Calycanthus floridus var. glaucus (Eastern sweetshrub).